Here is a 197-residue protein sequence, read N- to C-terminus: Holliday junction branch migration complex subunit RuvA (197 aa).

The tract at residues 1 to 64 is domain I; that stretch reads MIGRLRGIVA…EDSVSLYGFL (64 aa). The interval 65–143 is domain II; it reads REGERRLFRD…QFGAGGALPT (79 aa). The flexible linker stretch occupies residues 144–153; sequence GSGPAPADPL. Positions 153–197 are domain III; it reads LSDATVALQQLGYKPAEAARMAREAFNEGDEVAIVIRKALQSALR.

Belongs to the RuvA family. Homotetramer. Forms an RuvA(8)-RuvB(12)-Holliday junction (HJ) complex. HJ DNA is sandwiched between 2 RuvA tetramers; dsDNA enters through RuvA and exits via RuvB. An RuvB hexamer assembles on each DNA strand where it exits the tetramer. Each RuvB hexamer is contacted by two RuvA subunits (via domain III) on 2 adjacent RuvB subunits; this complex drives branch migration. In the full resolvosome a probable DNA-RuvA(4)-RuvB(12)-RuvC(2) complex forms which resolves the HJ.

It is found in the cytoplasm. Functionally, the RuvA-RuvB-RuvC complex processes Holliday junction (HJ) DNA during genetic recombination and DNA repair, while the RuvA-RuvB complex plays an important role in the rescue of blocked DNA replication forks via replication fork reversal (RFR). RuvA specifically binds to HJ cruciform DNA, conferring on it an open structure. The RuvB hexamer acts as an ATP-dependent pump, pulling dsDNA into and through the RuvAB complex. HJ branch migration allows RuvC to scan DNA until it finds its consensus sequence, where it cleaves and resolves the cruciform DNA. The polypeptide is Holliday junction branch migration complex subunit RuvA (Stenotrophomonas maltophilia (strain R551-3)).